We begin with the raw amino-acid sequence, 352 residues long: Uroporphyrinogen decarboxylase (352 aa).

Substrate contacts are provided by residues 26–30 (RQAGR), aspartate 76, tyrosine 153, serine 208, and histidine 323.

This sequence belongs to the uroporphyrinogen decarboxylase family. As to quaternary structure, homodimer.

It is found in the cytoplasm. The catalysed reaction is uroporphyrinogen III + 4 H(+) = coproporphyrinogen III + 4 CO2. The protein operates within porphyrin-containing compound metabolism; protoporphyrin-IX biosynthesis; coproporphyrinogen-III from 5-aminolevulinate: step 4/4. Its function is as follows. Catalyzes the decarboxylation of four acetate groups of uroporphyrinogen-III to yield coproporphyrinogen-III. In Prochlorococcus marinus (strain NATL2A), this protein is Uroporphyrinogen decarboxylase.